Here is a 123-residue protein sequence, read N- to C-terminus: VQ motif-containing protein 29 (123 aa).

The disordered stretch occupies residues 24-55 (TKNYLTSLHSTRKQPSKPLKRPAISSPLNPMH). A compositionally biased stretch (basic residues) spans 33–43 (STRKQPSKPLK). Residues 66–75 (FKVLVQRLTG) carry the VQ motif. A compositionally biased stretch (basic and acidic residues) spans 77-94 (PEHETVQAKPLKTSDDAA). Residues 77–123 (PEHETVQAKPLKTSDDAAKQSSSSFAFDPSSSWGDFSFQNPANISRW) are disordered. The segment covering 97–108 (SSSSFAFDPSSS) has biased composition (low complexity). Positions 109–123 (WGDFSFQNPANISRW) are enriched in polar residues.

Its subcellular location is the nucleus. Its function is as follows. May function as negative regulator of flowering transition. The polypeptide is VQ motif-containing protein 29 (Arabidopsis thaliana (Mouse-ear cress)).